A 295-amino-acid chain; its full sequence is 33 kDa chaperonin (295 aa).

2 disulfides stabilise this stretch: cysteine 237–cysteine 239 and cysteine 270–cysteine 273.

The protein belongs to the HSP33 family. Under oxidizing conditions two disulfide bonds are formed involving the reactive cysteines. Under reducing conditions zinc is bound to the reactive cysteines and the protein is inactive.

It is found in the cytoplasm. Its function is as follows. Redox regulated molecular chaperone. Protects both thermally unfolding and oxidatively damaged proteins from irreversible aggregation. Plays an important role in the bacterial defense system toward oxidative stress. The sequence is that of 33 kDa chaperonin from Geobacillus sp. (strain WCH70).